The following is a 276-amino-acid chain: Formamidopyrimidine-DNA glycosylase (276 aa).

The active-site Schiff-base intermediate with DNA is proline 2. The Proton donor role is filled by glutamate 3. Residue lysine 58 is the Proton donor; for beta-elimination activity of the active site. Residues histidine 92, arginine 111, and lysine 154 each coordinate DNA. The segment at 239 to 273 (QVYGHAGEECNNCGTILEKIKVNGRGTTFCPHCQV) adopts an FPG-type zinc-finger fold. Arginine 263 serves as the catalytic Proton donor; for delta-elimination activity.

The protein belongs to the FPG family. In terms of assembly, monomer. The cofactor is Zn(2+).

The catalysed reaction is Hydrolysis of DNA containing ring-opened 7-methylguanine residues, releasing 2,6-diamino-4-hydroxy-5-(N-methyl)formamidopyrimidine.. It catalyses the reaction 2'-deoxyribonucleotide-(2'-deoxyribose 5'-phosphate)-2'-deoxyribonucleotide-DNA = a 3'-end 2'-deoxyribonucleotide-(2,3-dehydro-2,3-deoxyribose 5'-phosphate)-DNA + a 5'-end 5'-phospho-2'-deoxyribonucleoside-DNA + H(+). Its function is as follows. Involved in base excision repair of DNA damaged by oxidation or by mutagenic agents. Acts as a DNA glycosylase that recognizes and removes damaged bases. Has a preference for oxidized purines, such as 7,8-dihydro-8-oxoguanine (8-oxoG). Has AP (apurinic/apyrimidinic) lyase activity and introduces nicks in the DNA strand. Cleaves the DNA backbone by beta-delta elimination to generate a single-strand break at the site of the removed base with both 3'- and 5'-phosphates. The sequence is that of Formamidopyrimidine-DNA glycosylase from Lactobacillus johnsonii (strain CNCM I-12250 / La1 / NCC 533).